Consider the following 415-residue polypeptide: Serine hydroxymethyltransferase (415 aa).

Residues Leu-117 and 121 to 123 (GHL) each bind (6S)-5,6,7,8-tetrahydrofolate. Lys-226 carries the N6-(pyridoxal phosphate)lysine modification. Position 349-351 (349-351 (SPF)) interacts with (6S)-5,6,7,8-tetrahydrofolate.

It belongs to the SHMT family. As to quaternary structure, homodimer. Pyridoxal 5'-phosphate serves as cofactor.

It is found in the cytoplasm. The catalysed reaction is (6R)-5,10-methylene-5,6,7,8-tetrahydrofolate + glycine + H2O = (6S)-5,6,7,8-tetrahydrofolate + L-serine. The protein operates within one-carbon metabolism; tetrahydrofolate interconversion. It functions in the pathway amino-acid biosynthesis; glycine biosynthesis; glycine from L-serine: step 1/1. Functionally, catalyzes the reversible interconversion of serine and glycine with tetrahydrofolate (THF) serving as the one-carbon carrier. This reaction serves as the major source of one-carbon groups required for the biosynthesis of purines, thymidylate, methionine, and other important biomolecules. Also exhibits THF-independent aldolase activity toward beta-hydroxyamino acids, producing glycine and aldehydes, via a retro-aldol mechanism. The sequence is that of Serine hydroxymethyltransferase from Geobacter sp. (strain M21).